A 494-amino-acid polypeptide reads, in one-letter code: Potassium voltage-gated channel subfamily A member 2 (494 aa).

The disordered stretch occupies residues 1–25 (MTVATGDPSDEAAAHPGNPAEYDPD). Residues 1 to 124 (MTVATGDPSD…YELGDEAIEL (124 aa)) form a tetramerization domain region. At 1-159 (MTVATGDPSD…LLFEYPESSG (159 aa)) the chain is on the cytoplasmic side. Residues 160 to 181 (PARIIAIISVMVILISIVSFCL) traverse the membrane as a helical segment. Topologically, residues 182–216 (ETLPIFRNDDDEPHSVFDTNTNTTIYFTSTYFTDP) are extracellular. Asn-203 carries an N-linked (GlcNAc...) asparagine glycan. The helical transmembrane segment at 217-238 (FFILETLCIIWFSFEFLVRLFA) threads the bilayer. The S-palmitoyl cysteine moiety is linked to residue Cys-239. Topologically, residues 239–249 (CPSKSGFFGNV) are cytoplasmic. The chain crosses the membrane as a helical span at residues 250–270 (MNIIDVVAIIPYFITLATELA). Topologically, residues 271–284 (EKPEDGQAGQQAMS) are extracellular. The chain crosses the membrane as a helical; Voltage-sensor span at residues 285 to 305 (LAILRVIRLVRVFRIFKLSRH). At 306–320 (SKGLQILGQTLKASM) the chain is on the cytoplasmic side. Residues 307–320 (KGLQILGQTLKASM) form an S4-S5 linker region. Residues 321–342 (RELGLLIFFLFIGVILFSSAVY) traverse the membrane as a helical segment. Over 343–356 (FAEADEPESQFESI) the chain is Extracellular. Positions 357–368 (PDAFWWAVVSMT) form an intramembrane region, helical. The Selectivity filter motif lies at 369-374 (TVGYGD). Residues 369-376 (TVGYGDMV) lie within the membrane without spanning it. At 377–383 (PTTIGGK) the chain is on the extracellular side. The chain crosses the membrane as a helical span at residues 384-412 (IVGSLCAIAGVLTIALPVPVIVSNFNYFY). At 413 to 494 (HRETEGEEQA…VNITKMLTDV (82 aa)) the chain is on the cytoplasmic side. The PDZ-binding motif lies at 492–494 (TDV).

This sequence belongs to the potassium channel family. A (Shaker) (TC 1.A.1.2) subfamily. Kv1.2/KCNA2 sub-subfamily. Homotetramer and heterotetramer with other family members. As to expression, expressed in oligodendrocytes.

Its subcellular location is the cell membrane. It catalyses the reaction K(+)(in) = K(+)(out). Voltage-gated potassium channel that mediates transmembrane potassium transport in excitable membranes, primarily in the brain and central nervous system. Prevents aberrant action potential firing and regulates neuronal output. Forms tetrameric potassium-selective channels through which potassium ions pass in accordance with their electrochemical gradient. The channel alternates between opened and closed conformations in response to the voltage difference across the membrane. Can form functional homotetrameric channels and heterotetrameric channels with other family members; the channels characteristics depend critically on the types of channel-forming alpha subunits that are present. Channel properties are modulated by cytoplasmic beta subunits that regulate the subcellular location of the alpha subunits. In vivo, membranes probably contain a mixture of heteromeric potassium channel complexes, making it difficult to assign currents observed in intact tissues to any particular potassium channel family member. Homotetrameric KCNA2 forms a delayed-rectifier potassium channel that opens in response to membrane depolarization, followed by slow spontaneous channel closure. Regulates neuronal excitability and plays a role as pacemaker in the regulation of neuronal action potentials. KCNA2-containing channels play a presynaptic role and prevent hyperexcitability and aberrant action potential firing. Response to toxins that are selective for KCNA2-containing potassium channels suggests that in Purkinje cells, dendritic subthreshold KCNA2-containing potassium channels prevent random spontaneous calcium spikes, suppressing dendritic hyperexcitability without hindering the generation of somatic action potentials, and thereby play an important role in motor coordination. Plays a role in the induction of long-term potentiation of neuron excitability in the CA3 layer of the hippocampus. This chain is Potassium voltage-gated channel subfamily A member 2 (kcna2), found in Oncorhynchus mykiss (Rainbow trout).